Here is a 360-residue protein sequence, read N- to C-terminus: Protein RecA (360 aa).

Residue 64-71 (GHESSGKT) coordinates ATP. Residues 333 to 360 (QEQVQPEPKSKQSKSKQASEQATQDELI) are disordered.

The protein belongs to the RecA family.

The protein resides in the cytoplasm. Its function is as follows. Can catalyze the hydrolysis of ATP in the presence of single-stranded DNA, the ATP-dependent uptake of single-stranded DNA by duplex DNA, and the ATP-dependent hybridization of homologous single-stranded DNAs. It interacts with LexA causing its activation and leading to its autocatalytic cleavage. The chain is Protein RecA from Francisella philomiragia subsp. philomiragia (strain ATCC 25017 / CCUG 19701 / FSC 153 / O#319-036).